A 377-amino-acid polypeptide reads, in one-letter code: Rhodopsin, long-wavelength (377 aa).

Over 1 to 51 (MIAVSGPSYEAFSYGGQARFNNQTVVDKVPPDMLHLIDANWYQYPPLNPMW) the chain is Extracellular. An N-linked (GlcNAc...) asparagine glycan is attached at N22. Residues 52–76 (HGILGFVIGMLGFVSAMGNGMVVYI) traverse the membrane as a helical segment. The Cytoplasmic segment spans residues 77–88 (FLSTKSLRTPSN). The chain crosses the membrane as a helical span at residues 89–113 (LFVINLAISNFLMMFCMSPPMVINC). The Extracellular segment spans residues 114–128 (YYETWVLGPLFCQIY). A disulfide bridge connects residues C125 and C202. A helical membrane pass occupies residues 129–148 (AMLGSLFGCGSIWTMTMIAF). Residues 149–167 (DRYNVIVKGLSGKPLSING) lie on the Cytoplasmic side of the membrane. Residues 168–191 (ALIRIIAIWLFSLGWTIAPMFGWN) form a helical membrane-spanning segment. Residues 192–215 (RYVPEGNMTACGTDYFNRGLLSAS) lie on the Extracellular side of the membrane. N-linked (GlcNAc...) asparagine glycosylation is present at N198. The chain crosses the membrane as a helical span at residues 216 to 243 (YLVCYGIWVYFVPLFLIIYSYWFIIQAV). Residues 244-278 (AAHEKNMREQAKKMNVASLRSSENQNTSAECKLAK) are Cytoplasmic-facing. Residues 279 to 302 (VALMTISLWFMAWTPYLVINFSGI) traverse the membrane as a helical segment. Over 303–309 (FNLVKIS) the chain is Extracellular. Residues 310–334 (PLFTIWGSLFAKANAVYNPIVYGIS) form a helical membrane-spanning segment. K321 is subject to N6-(retinylidene)lysine. Residues 335–377 (HPKYRAALFAKFPSLACAAEPSSDAVSTTSGTTTVTDNEKSNA) lie on the Cytoplasmic side of the membrane. Residues 357–370 (SDAVSTTSGTTTVT) are compositionally biased toward low complexity. Residues 357-377 (SDAVSTTSGTTTVTDNEKSNA) are disordered.

It belongs to the G-protein coupled receptor 1 family. Opsin subfamily. In terms of processing, phosphorylated on some or all of the serine and threonine residues present in the C-terminal region.

The protein localises to the membrane. In terms of biological role, visual pigments are the light-absorbing molecules that mediate vision. They consist of an apoprotein, opsin, covalently linked to 11-cis-retinal. This is Rhodopsin, long-wavelength from Apis mellifera (Honeybee).